Reading from the N-terminus, the 497-residue chain is Cytochrome P450 26A1 (497 aa).

Heme is bound at residue Cys442.

It belongs to the cytochrome P450 family. Requires heme as cofactor.

It localises to the endoplasmic reticulum membrane. It is found in the microsome membrane. It carries out the reaction all-trans-retinoate + reduced [NADPH--hemoprotein reductase] + O2 = all-trans-(4S)-hydroxyretinoate + oxidized [NADPH--hemoprotein reductase] + H2O + H(+). The catalysed reaction is all-trans-(4S)-hydroxyretinoate + reduced [NADPH--hemoprotein reductase] + O2 = all-trans-(4S,16)-dihydroxyretinoate + oxidized [NADPH--hemoprotein reductase] + H2O + H(+). It catalyses the reaction all-trans-retinoate + reduced [NADPH--hemoprotein reductase] + O2 = all-trans-18-hydroxyretinoate + oxidized [NADPH--hemoprotein reductase] + H2O + H(+). In terms of biological role, a cytochrome P450 monooxygenase involved in the metabolism of retinoates (RAs), the active metabolites of vitamin A, and critical signaling molecules in animals. RAs exist as at least four different isomers: all-trans-RA (atRA), 9-cis-RA, 13-cis-RA, and 9,13-dicis-RA, where atRA is considered to be the biologically active isomer, although 9-cis-RA and 13-cis-RA also have activity. Catalyzes the hydroxylation of atRA primarily at C-4 and C-18, thereby contributing to the regulation of atRA homeostasis and signaling. Hydroxylation of atRA limits its biological activity and initiates a degradative process leading to its eventual elimination. Involved in the convertion of atRA to all-trans-4-oxo-RA. Able to metabolize other RAs such as 9-cis, 13-cis and 9,13-di-cis RA. Can oxidize all-trans-13,14-dihydroretinoate (DRA) to metabolites which could include all-trans-4-oxo-DRA, all-trans-4-hydroxy-DRA, all-trans-5,8-epoxy-DRA, and all-trans-18-hydroxy-DRA. May play a role in the oxidative metabolism of xenobiotics such as tazarotenic acid. The protein is Cytochrome P450 26A1 of Mus musculus (Mouse).